The primary structure comprises 660 residues: DNA mismatch repair protein MutL (660 aa).

It belongs to the DNA mismatch repair MutL/HexB family.

Its function is as follows. This protein is involved in the repair of mismatches in DNA. It is required for dam-dependent methyl-directed DNA mismatch repair. May act as a 'molecular matchmaker', a protein that promotes the formation of a stable complex between two or more DNA-binding proteins in an ATP-dependent manner without itself being part of a final effector complex. This chain is DNA mismatch repair protein MutL, found in Streptococcus pyogenes serotype M1.